Here is a 318-residue protein sequence, read N- to C-terminus: NADH-ubiquinone oxidoreductase chain 1 (318 aa).

Helical transmembrane passes span 2–22 (FLMN…FLTL), 68–88 (ISLF…MWIP), 102–122 (ILFI…SGWA), 146–166 (LAII…SSLI), 171–191 (FTWL…STLA), 217–237 (AGPF…MNAL), 253–273 (EMFT…FLWI), and 294–314 (LPLT…MACI).

It belongs to the complex I subunit 1 family.

It is found in the mitochondrion inner membrane. The catalysed reaction is a ubiquinone + NADH + 5 H(+)(in) = a ubiquinol + NAD(+) + 4 H(+)(out). Its function is as follows. Core subunit of the mitochondrial membrane respiratory chain NADH dehydrogenase (Complex I) that is believed to belong to the minimal assembly required for catalysis. Complex I functions in the transfer of electrons from NADH to the respiratory chain. The immediate electron acceptor for the enzyme is believed to be ubiquinone. The protein is NADH-ubiquinone oxidoreductase chain 1 (MT-ND1) of Tamias sibiricus (Siberian chipmunk).